Reading from the N-terminus, the 332-residue chain is Thiamine thiazole synthase (332 aa).

Residues C87, 108–109, G116, and V184 contribute to the substrate site; that span reads EA. C221 carries the 2,3-didehydroalanine (Cys) modification. Residues D223, H238, M290, and 300-302 contribute to the substrate site; that span reads RMG.

The protein belongs to the THI4 family. Homooctamer. Fe cation serves as cofactor. During the catalytic reaction, a sulfide is transferred from Cys-221 to a reaction intermediate, generating a dehydroalanine residue.

It localises to the cytoplasm. Its subcellular location is the nucleus. It catalyses the reaction [ADP-thiazole synthase]-L-cysteine + glycine + NAD(+) = [ADP-thiazole synthase]-dehydroalanine + ADP-5-ethyl-4-methylthiazole-2-carboxylate + nicotinamide + 3 H2O + 2 H(+). Involved in biosynthesis of the thiamine precursor thiazole. Catalyzes the conversion of NAD and glycine to adenosine diphosphate 5-(2-hydroxyethyl)-4-methylthiazole-2-carboxylic acid (ADT), an adenylated thiazole intermediate. The reaction includes an iron-dependent sulfide transfer from a conserved cysteine residue of the protein to a thiazole intermediate. The enzyme can only undergo a single turnover, which suggests it is a suicide enzyme. May have additional roles in adaptation to various stress conditions and in DNA damage tolerance. The chain is Thiamine thiazole synthase from Aspergillus fumigatus (strain ATCC MYA-4609 / CBS 101355 / FGSC A1100 / Af293) (Neosartorya fumigata).